Here is a 503-residue protein sequence, read N- to C-terminus: Probable cytosol aminopeptidase (503 aa).

Mn(2+) is bound by residues K272 and D277. The active site involves K284. Mn(2+) contacts are provided by D295, D354, and E356. Residue R358 is part of the active site.

The protein belongs to the peptidase M17 family. Mn(2+) serves as cofactor.

It localises to the cytoplasm. The catalysed reaction is Release of an N-terminal amino acid, Xaa-|-Yaa-, in which Xaa is preferably Leu, but may be other amino acids including Pro although not Arg or Lys, and Yaa may be Pro. Amino acid amides and methyl esters are also readily hydrolyzed, but rates on arylamides are exceedingly low.. It carries out the reaction Release of an N-terminal amino acid, preferentially leucine, but not glutamic or aspartic acids.. Its function is as follows. Presumably involved in the processing and regular turnover of intracellular proteins. Catalyzes the removal of unsubstituted N-terminal amino acids from various peptides. The polypeptide is Probable cytosol aminopeptidase (Chlorobium limicola (strain DSM 245 / NBRC 103803 / 6330)).